Reading from the N-terminus, the 278-residue chain is Large ribosomal subunit protein uL2c (278 aa).

The interval 224-256 is disordered; the sequence is NPVDHPHGGGEGRAPIGRKKPTTPWGYPALGRK.

This sequence belongs to the universal ribosomal protein uL2 family. Part of the 50S ribosomal subunit.

The protein localises to the plastid. This chain is Large ribosomal subunit protein uL2c (rpl2), found in Cuscuta exaltata (Tall dodder).